The primary structure comprises 380 residues: Endopolygalacturonase AN8327 (380 aa).

The N-terminal stretch at 1-19 (MFYALGPLALFAFATEVMA) is a signal peptide. A propeptide spanning residues 20 to 35 (TPVAYPMTTASPTLAK) is cleaved from the precursor. Cys-39 and Cys-57 are joined by a disulfide. 7 PbH1 repeats span residues 147 to 169 (LTDS…SING), 170 to 200 (CDGL…DIGE), 201 to 222 (SSNV…AVNS), 223 to 243 (GTSI…SIGS), 252 to 273 (VDTV…RIKA), 281 to 303 (IKGV…LIEQ), and 315 to 338 (TSGI…DSDG). The active-site Proton donor is the Asp-215. Cysteines 217 and 233 form a disulfide. Residue His-237 is part of the active site. N-linked (GlcNAc...) asparagine glycosylation occurs at Asn-327. Cysteines 345 and 350 form a disulfide. An N-linked (GlcNAc...) asparagine glycan is attached at Asn-352. Cysteines 369 and 378 form a disulfide.

The protein belongs to the glycosyl hydrolase 28 family.

The protein localises to the secreted. The catalysed reaction is (1,4-alpha-D-galacturonosyl)n+m + H2O = (1,4-alpha-D-galacturonosyl)n + (1,4-alpha-D-galacturonosyl)m.. In terms of biological role, involved in maceration and soft-rotting of plant tissue. Hydrolyzes the 1,4-alpha glycosidic bonds of de-esterified pectate in the smooth region of the plant cell wall. This Emericella nidulans (strain FGSC A4 / ATCC 38163 / CBS 112.46 / NRRL 194 / M139) (Aspergillus nidulans) protein is Endopolygalacturonase AN8327.